We begin with the raw amino-acid sequence, 143 residues long: Antiholin-like protein LrgA (143 aa).

Transmembrane regions (helical) follow at residues 6-26 (VYSF…SNII), 30-50 (LPIP…LLCL), 61-81 (LGTA…ISVI), and 97-117 (VIVV…QFIL).

Belongs to the CidA/LrgA family. LrgA subfamily.

It localises to the cell membrane. In terms of biological role, inhibits the expression or activity of extracellular murein hydrolases by interacting, possibly with LrgB, with the holin-like protein CidA. The LrgAB and CidA proteins may affect the proton motive force of the membrane. May be involved in programmed cell death (PCD), possibly triggering PCD in response to antibiotics and environmental stresses. The protein is Antiholin-like protein LrgA of Bacillus cereus (strain AH820).